A 298-amino-acid polypeptide reads, in one-letter code: MSEQTPHHCGSVAVIGRPNVGKSTLTNALVGAKVSIVSNRPQTTRHRLLGIATYPEGQLVLVDTPGLHKVQKRAMNRVMNRAARGSLEGVDAGLLVIEAGRWDEEDSLAFNVLRDAGIPVVLVVNKIDRLKDKGALLPFLQEVTAGRDFSSVHPISAQKRNGLEALVRDVLALLPEAPPMFGEDEITDRSQRFLAGELVREQLMRQLGEELPYATTVEIERFTEDGNLLRIGAVIWVEREGQKAIVIGKGGTRLKEIGAKSRLQMERLFGAKVFLETWVRVREGWSDDEAALKAFGYE.

The Era-type G domain maps to 8-176 (HCGSVAVIGR…VRDVLALLPE (169 aa)). A G1 region spans residues 16 to 23 (GRPNVGKS). 16–23 (GRPNVGKS) lines the GTP pocket. The tract at residues 42 to 46 (QTTRH) is G2. A G3 region spans residues 63-66 (DTPG). GTP contacts are provided by residues 63–67 (DTPGL) and 125–128 (NKID). The tract at residues 125–128 (NKID) is G4. Residues 155–157 (ISA) are G5. In terms of domain architecture, KH type-2 spans 199-283 (VREQLMRQLG…FLETWVRVRE (85 aa)).

Belongs to the TRAFAC class TrmE-Era-EngA-EngB-Septin-like GTPase superfamily. Era GTPase family. In terms of assembly, monomer.

It localises to the cytoplasm. The protein localises to the cell inner membrane. Functionally, an essential GTPase that binds both GDP and GTP, with rapid nucleotide exchange. Plays a role in 16S rRNA processing and 30S ribosomal subunit biogenesis and possibly also in cell cycle regulation and energy metabolism. In Stenotrophomonas maltophilia (strain R551-3), this protein is GTPase Era.